Reading from the N-terminus, the 404-residue chain is Voltage-gated potassium channel subunit beta-3 (404 aa).

The span at 1-14 (MQVSIACTEQNLRS) shows a compositional bias: polar residues. The tract at residues 1–77 (MQVSIACTEQ…LRESTGRGTG (77 aa)) is disordered. Residues 28–50 (PGGGNGGPAGGGHGNPPGGGGSG) are compositionally biased toward gly residues. NADP(+) contacts are provided by Thr97, Trp98, Gln104, and Asp126. The active-site Proton donor/acceptor is the Tyr131. NADP(+)-binding residues include Asn199, Ser229, Arg230, Gln255, Trp284, Pro286, Leu287, Ala288, Cys289, Lys295, Arg305, Gly364, Ser366, Gln370, and Glu373.

Belongs to the shaker potassium channel beta subunit family. In terms of assembly, forms heteromultimeric complex with alpha subunits. Interacts with KCNA5 and KCNB2. Brain specific. Most prominent expression in cerebellum. Weaker signals detected in cortex, occipital lobe, frontal lobe and temporal lobe. Not detected in spinal cord, heart, lung, liver, kidney, pancreas, placenta and skeletal muscle.

Its subcellular location is the cytoplasm. Its function is as follows. Regulatory subunit of the voltage-gated potassium (Kv) channels composed of pore-forming and potassium-conducting alpha subunits and of regulatory beta subunit. The beta-3/KCNAB3 subunit may mediate closure of potassium channels. Increases inactivation of Kv1.5/KCNA5 alpha subunit-containing channels. May display nicotinamide adenine dinucleotide phosphate (NADPH)-dependent aldoketoreductase activity. The binding of oxidized and reduced NADP(H) cofactors may be required for the regulation of potassium channel activity. This Homo sapiens (Human) protein is Voltage-gated potassium channel subunit beta-3.